Consider the following 309-residue polypeptide: MGINFDVSRPKARSSINMTTKFHTIGLIGKPHHPGTNQTLKRLHHWLTVQGYEVLVEERVASELGTHIVAVDLLEIGARCDLAIVVGGDGNMLGAARVLARFDVGVIGVNRGNLGFLTDLPPDAFEEALAKVLDGEFDTEHRFLLEAEVYRHGMLKASNTAVNEAVLHPGKIAHMIEFEVYIDNQFMYSQRADGMIVSTPTGSTAYALSAGGAILTPNLQALILVPMFPHTLSCRPIVVDACSTIKMVVSPENGENLEVSCDGHVHLAVLPGDEIIVRRSSEQLRLIHPKGHNYFHVLRSKLGWGSKLF.

Asp-89 serves as the catalytic Proton acceptor. Residues 89–90, 163–164, His-174, Arg-191, Asp-193, and 204–209 contribute to the NAD(+) site; these read DG, NE, and TAYALS.

Belongs to the NAD kinase family. It depends on a divalent metal cation as a cofactor.

Its subcellular location is the cytoplasm. It catalyses the reaction NAD(+) + ATP = ADP + NADP(+) + H(+). In terms of biological role, involved in the regulation of the intracellular balance of NAD and NADP, and is a key enzyme in the biosynthesis of NADP. Catalyzes specifically the phosphorylation on 2'-hydroxyl of the adenosine moiety of NAD to yield NADP. The polypeptide is NAD kinase (Shewanella sp. (strain MR-4)).